A 2924-amino-acid polypeptide reads, in one-letter code: Zinc finger ZZ-type and EF-hand domain-containing protein 1 (2924 aa).

Residues 1–41 form a disordered region; the sequence is MGNAPSNSSEDEAAAAGGEGWSPHQDWAADSGTTPGPGPAA. The N-myristoyl glycine moiety is linked to residue glycine 2. Residues 28-41 show a composition bias toward low complexity; sequence AADSGTTPGPGPAA. Residues 111 to 146 form the EF-hand domain; that stretch reads CSGEQFEEAFAQFDAEGDGTVDAENMLEALKNSSGA. A DOC domain is found at 226-405; it reads LVQKEKESPG…AIWYWSLLTS (180 aa). Serine 240 carries the post-translational modification Phosphoserine. Over residues 1452-1470 the composition is skewed to basic and acidic residues; the sequence is HLQPLDRRQRTSSVVEEHF. Residues 1452–1527 are disordered; it reads HLQPLDRRQR…STPTRRPPFT (76 aa). Residues 1472–1485 show a composition bias toward low complexity; that stretch reads GSASPTEAATPAAG. 3 positions are modified to phosphoserine: serine 1475, serine 1488, and serine 1509. At threonine 1510 the chain carries Phosphothreonine. The span at 1514 to 1523 shows a compositional bias: pro residues; that stretch reads PSPPSTPTRR. Residue serine 1515 is modified to Phosphoserine. A phosphothreonine mark is found at threonine 1519 and threonine 1521. Residues serine 1535 and serine 1538 each carry the phosphoserine modification. ZZ-type zinc fingers lie at residues 1776–1831 and 1825–1880; these read NVDI…FTCD and NMEF…MVTI. Zn(2+) contacts are provided by cysteine 1781, cysteine 1784, cysteine 1795, cysteine 1798, cysteine 1804, cysteine 1807, histidine 1817, histidine 1821, cysteine 1830, cysteine 1833, cysteine 1844, cysteine 1847, cysteine 1853, cysteine 1856, histidine 1866, and histidine 1870. The interval 2388–2418 is disordered; it reads DLELDERGDQEEELDRPVSSPGEAEQKKLDP. Serine 2407 carries the phosphoserine modification. At lysine 2630 the chain carries N6-acetyllysine.

Interacts with KLF6 and KLF9. Interacts via (ZZ-type 2 zinc finger) with histone H3 trimethylated at 'Lys-4' (H3K4me3) and histone H3 acetylated at 'Lys-4' (H3K4ac).

Its function is as follows. Histone H3 reader which may act as a transcriptional coactivator for KLF6 and KLF9 transcription factors. In Mus musculus (Mouse), this protein is Zinc finger ZZ-type and EF-hand domain-containing protein 1 (Zzef1).